The following is a 613-amino-acid chain: MSKIIGIDLGTSNSAAAVVISGKPTVIPAAEGVSLGGKAFPSYVAFTKDGQLLVGEPARRQALLNPEGTVYAAKRKMGTDYKYKIFGKEYTPQQISAFILQKIKRDAEAFLGEPVTDAVITVPAYFNDNQRQATKDAGAIAGLNVRRIINEPTAACLAYGIDKLNQTLKIVIYDLGGGTLDVTIMDFGQGVFQVLSTSGDTHLGGTDMDEAIVNFLADNFQRENGIDLRKDHSAYIRLRDAAEKAKIELSTVLETEINLPYITATQDGPKHLQYTLTRAKFEELIAPIVDRSKVPLDTALEGAKLKKGDIDKIILIGGPTRIPYVRKYVEDYFGRKAEGGVDPMEAVAMGAAIQGAVLAGEVKDIVLLDVTPLTLGIETLGGVMTPLIPANTTIPTKKSQIFTTAADMQTTVTIHVVQGERPLAKDDVSLGMFNLDGIPPAPRGVPQIEVTFDIDANGILNVSAKDLGTGKQQSISITATNKLSKDEIERMKKEAEQYAEQDKKAKEEIETINNAETLAYTAEKTINDAGDKIDESSKESVRSIVKDLRDAISSKDINKIKELSEKLTKEIQEIGTKMYQSQATQGTSQNSSQNNNSQNNNGDTVDADFKESK.

A disordered region spans residues 578–613 (MYQSQATQGTSQNSSQNNNSQNNNGDTVDADFKESK). Positions 580–602 (QSQATQGTSQNSSQNNNSQNNNG) are enriched in low complexity.

Belongs to the heat shock protein 70 family.

Acts as a chaperone. The protein is Chaperone protein DnaK of Picrophilus torridus (strain ATCC 700027 / DSM 9790 / JCM 10055 / NBRC 100828 / KAW 2/3).